Here is a 240-residue protein sequence, read N- to C-terminus: 1-(5-phosphoribosyl)-5-[(5-phosphoribosylamino)methylideneamino] imidazole-4-carboxamide isomerase (240 aa).

D8 serves as the catalytic Proton acceptor. Residue D129 is the Proton donor of the active site.

The protein belongs to the HisA/HisF family.

It is found in the cytoplasm. It carries out the reaction 1-(5-phospho-beta-D-ribosyl)-5-[(5-phospho-beta-D-ribosylamino)methylideneamino]imidazole-4-carboxamide = 5-[(5-phospho-1-deoxy-D-ribulos-1-ylimino)methylamino]-1-(5-phospho-beta-D-ribosyl)imidazole-4-carboxamide. Its pathway is amino-acid biosynthesis; L-histidine biosynthesis; L-histidine from 5-phospho-alpha-D-ribose 1-diphosphate: step 4/9. The polypeptide is 1-(5-phosphoribosyl)-5-[(5-phosphoribosylamino)methylideneamino] imidazole-4-carboxamide isomerase (Listeria welshimeri serovar 6b (strain ATCC 35897 / DSM 20650 / CCUG 15529 / CIP 8149 / NCTC 11857 / SLCC 5334 / V8)).